The primary structure comprises 319 residues: Ankyrin repeat domain-containing protein 1 (319 aa).

Residues 61-89 (KTEKQREAELKKKKLEQRSKLENLEDLEI) are a coiled coil. ANK repeat units lie at residues 152–181 (YKRTALHRACLEGHLAIVEKLIEAGAQIEF), 185–214 (LESTAIHWASRGGSLDVLKLLLNKGAKISA), 218–247 (LLSTPLHVAVRTGHYECAEHLIACEADLNA), 251–280 (EGDTPLHDAVRLNRYKMIRLLITYGADLNV), and 284–315 (AGKTPMDLVLHWQNGTKAIFDSLKENSYKASR).

In terms of assembly, interacts with TTN/titin and YBX1.

It is found in the nucleus. Its function is as follows. May play an important role in endothelial cell activation. May act as a nuclear transcription factor that negatively regulates the expression of cardiac genes. In Bos taurus (Bovine), this protein is Ankyrin repeat domain-containing protein 1 (ANKRD1).